The sequence spans 550 residues: Protein UshA (550 aa).

An N-terminal signal peptide occupies residues 1-25 (MKFLKRGVALALLAAFALTTQPAQA). Asp-41, His-43, Asp-84, Asn-116, His-217, His-252, and Gln-254 together coordinate Zn(2+). Cys-258 and Cys-275 form a disulfide bridge. Residues Phe-429 and 498-504 (FNATGGD) each bind substrate.

Belongs to the 5'-nucleotidase family. As to quaternary structure, monomer. Zn(2+) is required as a cofactor.

It is found in the periplasm. The catalysed reaction is UDP-sugar + H2O = UMP + alpha-D-aldose 1-phosphate.. It catalyses the reaction a ribonucleoside 5'-phosphate + H2O = a ribonucleoside + phosphate. Functionally, degradation of external UDP-glucose to uridine monophosphate and glucose-1-phosphate, which can then be used by the cell. This chain is Protein UshA (ushA), found in Salmonella pullorum.